The primary structure comprises 568 residues: N66 matrix protein (568 aa).

The first 22 residues, 1-22, serve as a signal peptide directing secretion; sequence MWRMTTLLHLTALLVLIPLCHC. An Alpha-carbonic anhydrase domain is found at 55-567; that stretch reads AGFSYNRDIC…KHPLRVYKNS (513 aa). Zn(2+) is bound by residues His154, His156, and His179. The interval 259-421 is disordered; it reads NGNNGNNGNG…NGYNGDNGNS (163 aa). Positions 280 to 290 are enriched in gly residues; that stretch reads GNNGNGNGNNG. Residues 291–318 show a composition bias toward low complexity; the sequence is YNGNNGYNGNNGNNGNGNNDNNGNDNNG. 2 stretches are compositionally biased toward gly residues: residues 319-352 and 362-380; these read NNGG…GNNG and NGNG…GNNG. An N-linked (GlcNAc...) asparagine glycan is attached at Asn389. The span at 390–413 shows a compositional bias: gly residues; that stretch reads GSNGNNGGNGNNGNNGDNGNGDNG. 506–507 contacts substrate; it reads TT. Asn511 carries N-linked (GlcNAc...) asparagine glycosylation.

It belongs to the alpha-carbonic anhydrase family. In terms of assembly, homooligomer; disulfide-linked. May also be disulfide-linked to insoluble organic matrix. The cofactor is Zn(2+). In terms of tissue distribution, expressed in both the dorsal region of the mantle and the mantle edge. Is dispersed in calcium carbonate and also linked by disulfide bonds to the organic core of nacre.

It localises to the secreted. The protein localises to the extracellular space. The protein resides in the extracellular matrix. It catalyses the reaction hydrogencarbonate + H(+) = CO2 + H2O. In terms of biological role, acts as a negative regulator for calcification in the shells of mollusks. May function both as a calcium concentrator and as a carbonic anhydrase required for production of carbonate ions, which are assembled to CaCO(3) at mineralization sites. Is important for shell formation in both the calcitic prismatic layer and the aragonitic nacreous layer. The protein is N66 matrix protein of Pinctada maxima (Silver-lipped pearl oyster).